We begin with the raw amino-acid sequence, 399 residues long: Putative 3'-5' exonuclease R431 (399 aa).

Residues 118–297 (FQIVDNWIEN…IYNELQLMTN (180 aa)) enclose the 3'-5' exonuclease domain. An R3H domain is found at 335–399 (ERRLKSIESK…NKYVIITRHC (65 aa)).

This Acanthamoeba polyphaga (Amoeba) protein is Putative 3'-5' exonuclease R431.